A 315-amino-acid chain; its full sequence is Ribosomal RNA small subunit methyltransferase H (315 aa).

Residues 37 to 39 (GGH), D57, F83, D105, and Q112 each bind S-adenosyl-L-methionine.

The protein belongs to the methyltransferase superfamily. RsmH family.

Its subcellular location is the cytoplasm. It catalyses the reaction cytidine(1402) in 16S rRNA + S-adenosyl-L-methionine = N(4)-methylcytidine(1402) in 16S rRNA + S-adenosyl-L-homocysteine + H(+). Functionally, specifically methylates the N4 position of cytidine in position 1402 (C1402) of 16S rRNA. This is Ribosomal RNA small subunit methyltransferase H from Pseudomonas putida (strain ATCC 47054 / DSM 6125 / CFBP 8728 / NCIMB 11950 / KT2440).